Consider the following 442-residue polypeptide: D-serine dehydratase (442 aa).

Lysine 118 is modified (N6-(pyridoxal phosphate)lysine).

This sequence belongs to the serine/threonine dehydratase family. DsdA subfamily. In terms of assembly, monomer. The cofactor is pyridoxal 5'-phosphate.

The catalysed reaction is D-serine = pyruvate + NH4(+). This chain is D-serine dehydratase, found in Shigella dysenteriae serotype 1 (strain Sd197).